Consider the following 374-residue polypeptide: UDP-N-acetylglucosamine--N-acetylmuramyl-(pentapeptide) pyrophosphoryl-undecaprenol N-acetylglucosamine transferase (374 aa).

UDP-N-acetyl-alpha-D-glucosamine is bound by residues 13–15 (TGG), asparagine 124, arginine 165, serine 193, and glutamine 294.

It belongs to the glycosyltransferase 28 family. MurG subfamily.

It localises to the cell inner membrane. It catalyses the reaction di-trans,octa-cis-undecaprenyl diphospho-N-acetyl-alpha-D-muramoyl-L-alanyl-D-glutamyl-meso-2,6-diaminopimeloyl-D-alanyl-D-alanine + UDP-N-acetyl-alpha-D-glucosamine = di-trans,octa-cis-undecaprenyl diphospho-[N-acetyl-alpha-D-glucosaminyl-(1-&gt;4)]-N-acetyl-alpha-D-muramoyl-L-alanyl-D-glutamyl-meso-2,6-diaminopimeloyl-D-alanyl-D-alanine + UDP + H(+). Its pathway is cell wall biogenesis; peptidoglycan biosynthesis. Functionally, cell wall formation. Catalyzes the transfer of a GlcNAc subunit on undecaprenyl-pyrophosphoryl-MurNAc-pentapeptide (lipid intermediate I) to form undecaprenyl-pyrophosphoryl-MurNAc-(pentapeptide)GlcNAc (lipid intermediate II). This Rhizobium meliloti (strain 1021) (Ensifer meliloti) protein is UDP-N-acetylglucosamine--N-acetylmuramyl-(pentapeptide) pyrophosphoryl-undecaprenol N-acetylglucosamine transferase.